The following is a 204-amino-acid chain: Urease accessory protein UreG (204 aa).

Residue 15–22 coordinates GTP; it reads GPVGSGKT.

It belongs to the SIMIBI class G3E GTPase family. UreG subfamily. In terms of assembly, homodimer. UreD, UreF and UreG form a complex that acts as a GTP-hydrolysis-dependent molecular chaperone, activating the urease apoprotein by helping to assemble the nickel containing metallocenter of UreC. The UreE protein probably delivers the nickel.

The protein localises to the cytoplasm. Functionally, facilitates the functional incorporation of the urease nickel metallocenter. This process requires GTP hydrolysis, probably effectuated by UreG. The protein is Urease accessory protein UreG of Methylobacterium sp. (strain 4-46).